Reading from the N-terminus, the 135-residue chain is Succinate dehydrogenase assembly factor 2, mitochondrial (135 aa).

The protein belongs to the SDHAF2 family. Interacts with the flavoprotein subunit within the SDH catalytic dimer.

Its subcellular location is the mitochondrion matrix. Functionally, plays an essential role in the assembly of succinate dehydrogenase (SDH), an enzyme complex (also referred to as respiratory complex II) that is a component of both the tricarboxylic acid (TCA) cycle and the mitochondrial electron transport chain, and which couples the oxidation of succinate to fumarate with the reduction of ubiquinone (coenzyme Q) to ubiquinol. Required for flavinylation (covalent attachment of FAD) of the flavoprotein subunit of the SDH catalytic dimer. In Meyerozyma guilliermondii (strain ATCC 6260 / CBS 566 / DSM 6381 / JCM 1539 / NBRC 10279 / NRRL Y-324) (Yeast), this protein is Succinate dehydrogenase assembly factor 2, mitochondrial.